The following is a 126-amino-acid chain: Holo-[acyl-carrier-protein] synthase (126 aa).

Mg(2+) contacts are provided by Asp-9 and Glu-58.

This sequence belongs to the P-Pant transferase superfamily. AcpS family. It depends on Mg(2+) as a cofactor.

It localises to the cytoplasm. The enzyme catalyses apo-[ACP] + CoA = holo-[ACP] + adenosine 3',5'-bisphosphate + H(+). Transfers the 4'-phosphopantetheine moiety from coenzyme A to a Ser of acyl-carrier-protein. The sequence is that of Holo-[acyl-carrier-protein] synthase from Sodalis glossinidius (strain morsitans).